The following is a 175-amino-acid chain: Protein-export protein SecB (175 aa).

This sequence belongs to the SecB family. Homotetramer, a dimer of dimers. One homotetramer interacts with 1 SecA dimer.

It is found in the cytoplasm. In terms of biological role, one of the proteins required for the normal export of preproteins out of the cell cytoplasm. It is a molecular chaperone that binds to a subset of precursor proteins, maintaining them in a translocation-competent state. It also specifically binds to its receptor SecA. The protein is Protein-export protein SecB of Anaplasma marginale (strain Florida).